Reading from the N-terminus, the 486-residue chain is 2-hydroxymuconic semialdehyde dehydrogenase (486 aa).

Residues Glu254 and Cys288 contribute to the active site.

The protein belongs to the aldehyde dehydrogenase family.

The catalysed reaction is (2Z,4E)-2-hydroxy-6-oxohexa-2,4-dienoate + NAD(+) + H2O = (2Z,4E)-2-hydroxyhexa-2,4-dienedioate + NADH + 2 H(+). The protein operates within aromatic compound metabolism; benzoate degradation via hydroxylation. In terms of biological role, 2-hydroxymuconic acid semialdehyde can be converted to 2-hydroxypent-2,4-dienoate either directly by the action of 2-hydroxymuconic semialdehyde hydrolase (HMSH) or by the action of three sequential enzymes, the first of which is HMSD. This Pseudomonas sp. (strain CF600) protein is 2-hydroxymuconic semialdehyde dehydrogenase (dmpC).